An 873-amino-acid polypeptide reads, in one-letter code: Tetratricopeptide repeat protein 16 (873 aa).

The interval Met-1 to Pro-20 is disordered. 8 TPR repeats span residues Val-61–Leu-94, Asp-96–Asn-128, Thr-136–Lys-169, Ala-251–Asp-284, Pro-285–Asp-318, Leu-331–Glu-364, Lys-365–Asp-398, and Gly-406–Lys-439. 2 disordered regions span residues Glu-553–Thr-626 and Ser-639–Val-873. The segment covering Gly-571 to Lys-582 has biased composition (acidic residues). Residues Glu-583–Glu-593 show a composition bias toward basic and acidic residues. 3 stretches are compositionally biased toward polar residues: residues Ala-600–Thr-626, Ser-639–Glu-663, and Thr-675–Arg-693. The segment covering Asn-694 to Ser-708 has biased composition (basic residues). A compositionally biased stretch (polar residues) spans Lys-709–Glu-750. A compositionally biased stretch (basic residues) spans Lys-763–Arg-784. Composition is skewed to polar residues over residues Arg-800 to Ser-828 and Gly-836 to Lys-860.

This chain is Tetratricopeptide repeat protein 16 (TTC16), found in Homo sapiens (Human).